Here is a 115-residue protein sequence, read N- to C-terminus: U3-lycotoxin-Ls1u (115 aa).

The first 20 residues, 1-20 (MKFVLLFGVLLVTLFSYSSA), serve as a signal peptide directing secretion. A propeptide spanning residues 21-44 (EMLDDFDQADEDELLSLIEKEEAR) is cleaved from the precursor. Disulfide bonds link Cys-48–Cys-63, Cys-55–Cys-72, and Cys-62–Cys-87.

It belongs to the neurotoxin 19 (CSTX) family. 01 subfamily. In terms of tissue distribution, expressed by the venom gland.

The protein localises to the secreted. The chain is U3-lycotoxin-Ls1u from Lycosa singoriensis (Wolf spider).